The chain runs to 632 residues: Transcription factor tazR (632 aa).

A DNA-binding region (zn(2)-C6 fungal-type) is located at residues 20–47; it reads CNECRARKLRCDRVRPTCGTCESLGVTC. Residues 77–130 are disordered; the sequence is WNGQQKAAGGSPGESPPCSEGGQTLRAVSESTSDGVHDEDHANGARPPSSQSSI.

It is found in the nucleus. Functionally, transcription factor that regulates the expression of the gene cluster that mediates the biosynthesis of azaterrilone A and other azaphilones, a class of fungal metabolites characterized by a highly oxygenated pyrano-quinone bicyclic core and exhibiting a broad range of bioactivities. The chain is Transcription factor tazR from Aspergillus terreus (strain NIH 2624 / FGSC A1156).